Reading from the N-terminus, the 878-residue chain is Alanine--tRNA ligase (878 aa).

Residues histidine 562, histidine 566, cysteine 670, and histidine 674 each contribute to the Zn(2+) site.

This sequence belongs to the class-II aminoacyl-tRNA synthetase family. Zn(2+) is required as a cofactor.

The protein resides in the cytoplasm. The catalysed reaction is tRNA(Ala) + L-alanine + ATP = L-alanyl-tRNA(Ala) + AMP + diphosphate. In terms of biological role, catalyzes the attachment of alanine to tRNA(Ala) in a two-step reaction: alanine is first activated by ATP to form Ala-AMP and then transferred to the acceptor end of tRNA(Ala). Also edits incorrectly charged Ser-tRNA(Ala) and Gly-tRNA(Ala) via its editing domain. In Acinetobacter baylyi (strain ATCC 33305 / BD413 / ADP1), this protein is Alanine--tRNA ligase.